The chain runs to 1047 residues: tRNA wybutosine-synthesizing protein 4 (1047 aa).

S-adenosyl-L-methionine-binding positions include Arg-69, Gly-95, Asp-122, 169–170 (DL), and Glu-196. The JmjC domain maps to 814–1003 (GRQYLRSISA…AAGRDVYGNR (190 aa)).

This sequence belongs to the methyltransferase superfamily. LCMT family.

It catalyses the reaction 7-[(3S)-3-amino-3-carboxypropyl]wyosine(37) in tRNA(Phe) + S-adenosyl-L-methionine = 7-[(3S)-(3-amino-3-methoxycarbonyl)propyl]wyosine(37) in tRNA(Phe) + S-adenosyl-L-homocysteine. It carries out the reaction 7-[(3S)-(3-amino-3-methoxycarbonyl)propyl]wyosine(37) in tRNA(Phe) + S-adenosyl-L-methionine + CO2 = wybutosine(37) in tRNA(Phe) + S-adenosyl-L-homocysteine + 2 H(+). Its pathway is tRNA modification; wybutosine-tRNA(Phe) biosynthesis. Functionally, probable S-adenosyl-L-methionine-dependent methyltransferase that acts as a component of the wybutosine biosynthesis pathway. Wybutosine is a hyper modified guanosine with a tricyclic base found at the 3'-position adjacent to the anticodon of eukaryotic phenylalanine tRNA. May methylate the carboxyl group of leucine residues to form alpha-leucine ester residues. The sequence is that of tRNA wybutosine-synthesizing protein 4 (ppm2) from Aspergillus fumigatus (strain ATCC MYA-4609 / CBS 101355 / FGSC A1100 / Af293) (Neosartorya fumigata).